The primary structure comprises 600 residues: DNA mismatch repair protein MutL (600 aa).

Positions 348–375 (QPQAQRPQTAWSAETSPFRPYQPTTGFS) are disordered. Polar residues predominate over residues 349-362 (PQAQRPQTAWSAET).

The protein belongs to the DNA mismatch repair MutL/HexB family.

In terms of biological role, this protein is involved in the repair of mismatches in DNA. It is required for dam-dependent methyl-directed DNA mismatch repair. May act as a 'molecular matchmaker', a protein that promotes the formation of a stable complex between two or more DNA-binding proteins in an ATP-dependent manner without itself being part of a final effector complex. This is DNA mismatch repair protein MutL from Rhizobium leguminosarum bv. trifolii (strain WSM2304).